Consider the following 301-residue polypeptide: Ribosomal protein L11 methyltransferase (301 aa).

Positions 130, 151, 172, and 239 each coordinate S-adenosyl-L-methionine.

The protein belongs to the methyltransferase superfamily. PrmA family.

Its subcellular location is the cytoplasm. The catalysed reaction is L-lysyl-[protein] + 3 S-adenosyl-L-methionine = N(6),N(6),N(6)-trimethyl-L-lysyl-[protein] + 3 S-adenosyl-L-homocysteine + 3 H(+). Functionally, methylates ribosomal protein L11. This is Ribosomal protein L11 methyltransferase from Campylobacter hominis (strain ATCC BAA-381 / DSM 21671 / CCUG 45161 / LMG 19568 / NCTC 13146 / CH001A).